Reading from the N-terminus, the 2515-residue chain is Probable maltase-glucoamylase 2 (2515 aa).

Over 1-9 (MARKLSVLE) the chain is Cytoplasmic. A helical membrane pass occupies residues 10–30 (VLLIIFCLIVVTIDILLLLLV). The Lumenal portion of the chain corresponds to 31 to 482 (LEETSDTSFT…DGVWIEMNEV (452 aa)). The 48-residue stretch at 41–88 (PECPEIPQSERIDCTPDQEVTEDICRWQYKCCWSPVADANVPRCFFPW) folds into the P-type 1 domain. 3 cysteine pairs are disulfide-bonded: C43–C72, C54–C71, and C65–C84. Residues 152 to 865 (SHENINLVDG…MDKQPANFIV (714 aa)) form a maltase region. Residue N167 is glycosylated (N-linked (GlcNAc...) asparagine). Residue Y371 is modified to Sulfotyrosine. N-linked (GlcNAc...) asparagine glycosylation is present at N421. E478 serves as the catalytic Nucleophile. E481 is an active-site residue. 3 disulfide bridges follow: C608-C619, C916-C933, and C928-C946. A glycan (N-linked (GlcNAc...) asparagine) is linked at N613. The P-type 2 domain occupies 904–950 (WNLPVSDLEKFNCYPDDPTASEESCRQRGCLWEDTSTPGVPTCYYDT). Positions 1023–1766 (PLNTPPQPVG…GVNTYVTQVS (744 aa)) are glucoamylase. Y1238 carries the post-translational modification Sulfotyrosine. Catalysis depends on D1375, which acts as the Nucleophile. E1378 is a catalytic residue. Disordered stretches follow at residues 1816–1901 (TPTK…PITT), 1994–2015 (STTV…STNA), and 2037–2091 (TVPD…SSTT). Residues 1817-1831 (PTKTSTIPMSSHPSP) are compositionally biased toward polar residues. The span at 1832 to 1901 (STTNATSSET…STNATVPITT (70 aa)) shows a compositional bias: low complexity. N-linked (GlcNAc...) asparagine glycosylation is present at N2249.

The protein belongs to the glycosyl hydrolase 31 family.

It localises to the membrane. It catalyses the reaction Hydrolysis of terminal (1-&gt;4)-linked alpha-D-glucose residues successively from non-reducing ends of the chains with release of beta-D-glucose.. This chain is Probable maltase-glucoamylase 2, found in Homo sapiens (Human).